Reading from the N-terminus, the 149-residue chain is Calmodulin (149 aa).

The residue at position 2 (A2) is an N-acetylalanine. 4 EF-hand domains span residues 8 to 43, 44 to 79, 81 to 116, and 117 to 149; these read EQIA…LGQN, PTEA…KMKD, DSEE…LGEK, and LTDE…MMAK. D21, D23, D25, C27, E32, D57, D59, N61, T63, E68, D94, D96, N98, and E105 together coordinate Ca(2+). K116 carries the post-translational modification N6,N6,N6-trimethyllysine. Residues D130, D132, D134, Q136, and E141 each contribute to the Ca(2+) site.

The protein belongs to the calmodulin family. The N-terminus is blocked.

Its function is as follows. Calmodulin mediates the control of a large number of enzymes, ion channels and other proteins by Ca(2+). Among the enzymes to be stimulated by the calmodulin-Ca(2+) complex are a number of protein kinases and phosphatases. The protein is Calmodulin of Spinacia oleracea (Spinach).